The primary structure comprises 122 residues: uncharacterized protein (122 aa).

This is an uncharacterized protein from Methanothermobacter thermautotrophicus (Methanobacterium thermoformicicum).